A 1095-amino-acid polypeptide reads, in one-letter code: DNA-directed RNA polymerase subunit beta (1095 aa).

A disordered region spans residues 1069-1095 (DLMQDVNPRRSTPSRPTYESLGKEYEE).

It belongs to the RNA polymerase beta chain family. In cyanobacteria the RNAP catalytic core is composed of 2 alpha, 1 beta, 1 beta', 1 gamma and 1 omega subunit. When a sigma factor is associated with the core the holoenzyme is formed, which can initiate transcription.

It catalyses the reaction RNA(n) + a ribonucleoside 5'-triphosphate = RNA(n+1) + diphosphate. In terms of biological role, DNA-dependent RNA polymerase catalyzes the transcription of DNA into RNA using the four ribonucleoside triphosphates as substrates. The sequence is that of DNA-directed RNA polymerase subunit beta from Prochlorococcus marinus (strain NATL1A).